The sequence spans 354 residues: MSLDKIMNEAISPWMKGDGPDSDIVLSSRIRLARNFKKYQFSTMQNEEETKQIQELFKKEFINKTVEPFGEFELLKMNELTPLQRRVLVEKHLISPNLAGTEYGACLLSESEHISVMLNEEDHIRIQCLFSGLQLSEALQSANQIDNWIEKEVEYAFDESLGYITSCPTNVGTGLRASVMIHLPGLVLTKRISRIIQVIQKLGLVVRGIYGEGSEALGNIFQVSNQMTLGKSEEDIIADLKSVIQQIIQQEKMARELIVQNSSIELEDKVYRSYGILANSRLIQSAEAANCLSDLRLGIDLGYIQGISRNILTELMVLTQPGILQQYAGGPLGPEERDYRRATLIRERLRIEKN.

One can recognise a Phosphagen kinase C-terminal domain in the interval 24-254; it reads IVLSSRIRLA…QQIIQQEKMA (231 aa). Residues 27-31, H92, R125, 176-180, and 207-212 contribute to the ATP site; these read SSRIR, RASVM, and RGIYGE. Residues 337 to 342 carry the RDXXRA motif of the pArg binding pocket involved in allosteric regulation motif; it reads RDYRRA.

It belongs to the ATP:guanido phosphotransferase family.

The enzyme catalyses L-arginyl-[protein] + ATP = N(omega)-phospho-L-arginyl-[protein] + ADP + H(+). Its activity is regulated as follows. Appears to be allosterically activated by the binding of pArg-containing polypeptides to the pArg-binding pocket localized in the C-terminal domain of McsB. Its function is as follows. Catalyzes the specific phosphorylation of arginine residues in a large number of proteins. Is part of the bacterial stress response system. Protein arginine phosphorylation has a physiologically important role and is involved in the regulation of many critical cellular processes, such as protein homeostasis, motility, competence, and stringent and stress responses, by regulating gene expression and protein activity. This chain is Protein-arginine kinase, found in Bacillus anthracis (strain A0248).